The primary structure comprises 510 residues: Protein fork head (510 aa).

2 disordered regions span residues 1–62 and 175–205; these read MQKL…SPLA and AMPP…YRRS. The span at 20-39 shows a compositional bias: gly residues; sequence SGGGGPPSGGGGGGGGGGGG. Low complexity predominate over residues 47 to 60; it reads NNPNPTSNGGSMSP. Phosphoserine is present on residues S187 and S190. The fork-head DNA-binding region spans 209-300; it reads AKPPYSYISL…GNMFENGCYL (92 aa). The interval 309–359 is disordered; the sequence is EKKEAIRQLHKSPSHSSLEATSPGKKDHEDSHHMHHHHHSRLDHHQHHKEA. Phosphoserine is present on residues S320, S322, and S330. A compositionally biased stretch (basic residues) spans 341 to 356; it reads HMHHHHHSRLDHHQHH.

It is found in the nucleus. In terms of biological role, fkh promotes terminal as opposed to segmental development. In the absence of fkh, this developmental switch does not occur. The nuclear localization of the fkh protein suggest that fkh regulates the transcription of other, subordinate, genes. The sequence is that of Protein fork head (fkh) from Drosophila melanogaster (Fruit fly).